The sequence spans 334 residues: Mitochondrial ribosome-associated GTPase 1 (334 aa).

Residues 36–209 form the CP-type G domain; it reads AKGLKKMQSS…LLDTPGVLAP (174 aa). Residues 83 to 86, 153 to 158, and G205 each bind GTP; these read NKMD and NVGKSS.

Belongs to the TRAFAC class YlqF/YawG GTPase family. MTG1 subfamily. Associates with the mitochondrial ribosome large subunit; the association occurs in a GTP-dependent manner.

The protein localises to the mitochondrion inner membrane. Plays a role in the regulation of the mitochondrial ribosome assembly and of translational activity. Displays mitochondrial GTPase activity. The chain is Mitochondrial ribosome-associated GTPase 1 (MTG1) from Homo sapiens (Human).